The chain runs to 231 residues: Trypsin (231 aa).

A propeptide spans 1–8 (activation peptide); the sequence is FPTDDDDK. A Peptidase S1 domain is found at 9–229; it reads IVGGYTCAAN…YVNWIQQTIA (221 aa). Intrachain disulfides connect cysteine 15/cysteine 145, cysteine 33/cysteine 49, cysteine 117/cysteine 218, cysteine 124/cysteine 191, cysteine 156/cysteine 170, and cysteine 181/cysteine 205. The active-site Charge relay system is histidine 48. Residues glutamate 60, asparagine 62, valine 65, and glutamate 70 each coordinate Ca(2+). The active-site Charge relay system is the aspartate 92. The Charge relay system role is filled by serine 185.

Belongs to the peptidase S1 family. Requires Ca(2+) as cofactor.

The protein localises to the secreted. The protein resides in the extracellular space. The catalysed reaction is Preferential cleavage: Arg-|-Xaa, Lys-|-Xaa.. This Sus scrofa (Pig) protein is Trypsin.